A 136-amino-acid polypeptide reads, in one-letter code: MSGTSLNSQRLDTSRITCTAIIKCLRPVYRRAGIAFTRGENTVEVTEEQLAIIRADSVLSVVSASSAETLAEAGGLDVLGVGDLNTRIRATVAGLDKANPEHFTAGGEPKVKAVSAALGEPVSSAQIKAALAEADA.

It is found in the host cytoplasm. This is an uncharacterized protein from Enterobacteriaceae (Bacteriophage Mu).